The following is a 363-amino-acid chain: MTVTGIIAEFNPFHNGHKYLLDYAEGIKIVAMSGNFVQRGEPAIVDKWIRAQMALENGADLVVELPFFTAVQSADYFASGAVDILSRLGIDSLTFGTEEVLDYQTIADVYSEKSEEMEAFVESLPSDLSYPQKTQKMWEKFAGVDFTGNTPNHILGLAYAKACAGKGITLNPIQRQGAGYHSLDKKVSFASATSLRLHKEDSDFVDKFMPNSKLFQTSPQVSWDNYFQLLVYQILTNPDLTSVFQVNEEIASRLKAAVREISSVEELVDKVATKRYTKARVRRILTYILVGAVDNSLPKSIHVLGFSQKGQFHLKSVKKSVDIVARIGRKPWDMLTQQADNVYQLGNPELCEQNFGRVPIRVK.

ATP-binding positions include isoleucine 7 to leucine 20, glycine 96, asparagine 152, and arginine 175.

The protein belongs to the TmcAL family.

The protein localises to the cytoplasm. It carries out the reaction cytidine(34) in elongator tRNA(Met) + acetate + ATP = N(4)-acetylcytidine(34) in elongator tRNA(Met) + AMP + diphosphate. Functionally, catalyzes the formation of N(4)-acetylcytidine (ac(4)C) at the wobble position of elongator tRNA(Met), using acetate and ATP as substrates. First activates an acetate ion to form acetyladenylate (Ac-AMP) and then transfers the acetyl group to tRNA to form ac(4)C34. The protein is tRNA(Met) cytidine acetate ligase of Streptococcus thermophilus (strain CNRZ 1066).